Consider the following 88-residue polypeptide: RKGRRDKIGKVKTAALKGSPQRRGVCTRVYTTTPKKPNSALRKVARVKLTSQVEVTAYIPGEAHNLQEHSMVLVRGGRVKDLPGVRYK.

The tract at residues 1-24 (RKGRRDKIGKVKTAALKGSPQRRG) is disordered. 3-methylthioaspartic acid is present on D81.

It belongs to the universal ribosomal protein uS12 family. In terms of assembly, part of the 30S ribosomal subunit. Contacts proteins S8 and S17. May interact with IF1 in the 30S initiation complex.

With S4 and S5 plays an important role in translational accuracy. Its function is as follows. Interacts with and stabilizes bases of the 16S rRNA that are involved in tRNA selection in the A site and with the mRNA backbone. Located at the interface of the 30S and 50S subunits, it traverses the body of the 30S subunit contacting proteins on the other side and probably holding the rRNA structure together. The combined cluster of proteins S8, S12 and S17 appears to hold together the shoulder and platform of the 30S subunit. In Mycobacterium szulgai, this protein is Small ribosomal subunit protein uS12 (rpsL).